A 30-amino-acid chain; its full sequence is MSELSAAPLRPGKTQESEKGIYYAREGCVS.

This is an uncharacterized protein from Treponema pallidum (strain Nichols).